Here is a 237-residue protein sequence, read N- to C-terminus: DCN1-like protein 5 (237 aa).

At serine 41 the chain carries Phosphoserine; by IKKA. The region spanning 46–232 (FSRKKCLAWF…LLDEFVEWQK (187 aa)) is the DCUN1 domain.

In terms of assembly, part of a complex that contains DCUN1D5, CUL1 and RBX1; this interaction is bridged by CUL1. Interacts (via the DCUN1 domain) with the unneddylated cullins: interacts with CUL1, CUL2, CUL3, CUL4A, CUL4B and CUL5; these interactions promote the cullin neddylation and the identity of the cullin dictates the affinity of the interaction. Interacts (via DCUN1 domain) with UBE2M (N-terminally acetylated form) and probably with UBE2F (N-terminally acetylated form). May also interact with regulators or subunits of cullin-RING ligases such as RBX1, RNF7, ELOB and DDB1; these interactions are bridged by cullins. Interacts with CAND1; this interaction is bridged by cullins and strongly inhibits the neddylation of cullins. These CAND-cullin-DCNL complexes can only be neddylated in the presence of a substrate adapter. In terms of processing, phosphorylation at Ser-41 is independent of cullin's interaction. Phosphorylated in response to both TICAM1 and MYD88 dependent Toll-like receptor (TLR) pathway activation. Phosphorylated in response to IL1B stimulation. As to expression, highly expressed in testis. Lower levels of expression in skin, thymus, spleen, lymph nodes, lung, brain, heart, skeletal muscles, kidney, liver an ovary.

The protein resides in the nucleus. It localises to the cytoplasm. It is found in the cytoskeleton. The protein localises to the spindle. Its function is as follows. Contributes to the neddylation of all cullins by transferring NEDD8 from N-terminally acetylated NEDD8-conjugating E2s enzyme to different cullin C-terminal domain-RBX complexes which is necessary for the activation of cullin-RING E3 ubiquitin ligases (CRLs). May play a role in DNA damage response and may participate in cell proliferation and anchorage-independent cell growth. This Mus musculus (Mouse) protein is DCN1-like protein 5.